An 85-amino-acid polypeptide reads, in one-letter code: Small ribosomal subunit protein uS17 (85 aa).

The protein belongs to the universal ribosomal protein uS17 family. In terms of assembly, part of the 30S ribosomal subunit.

Its function is as follows. One of the primary rRNA binding proteins, it binds specifically to the 5'-end of 16S ribosomal RNA. The sequence is that of Small ribosomal subunit protein uS17 from Actinobacillus succinogenes (strain ATCC 55618 / DSM 22257 / CCUG 43843 / 130Z).